Here is a 146-residue protein sequence, read N- to C-terminus: Basic phospholipase A2 73 (146 aa).

Residues 1–19 form the signal peptide; that stretch reads MYPAHLLVLLAVCVSLLGA. The propeptide occupies 20-27; sequence ASIPPLPL. Disulfide bonds link Cys38–Cys98, Cys54–Cys145, Cys56–Cys72, Cys71–Cys126, Cys78–Cys119, Cys87–Cys112, and Cys105–Cys117. The Ca(2+) site is built by Tyr55, Gly57, and Gly59. The active site involves His75. Asp76 is a binding site for Ca(2+). Asp120 is a catalytic residue.

This sequence belongs to the phospholipase A2 family. Group I subfamily. D49 sub-subfamily. The cofactor is Ca(2+). In terms of tissue distribution, expressed by the venom gland.

Its subcellular location is the secreted. It carries out the reaction a 1,2-diacyl-sn-glycero-3-phosphocholine + H2O = a 1-acyl-sn-glycero-3-phosphocholine + a fatty acid + H(+). Snake venom phospholipase A2 (PLA2) that inhibits neuromuscular transmission by blocking acetylcholine release from the nerve termini. PLA2 catalyzes the calcium-dependent hydrolysis of the 2-acyl groups in 3-sn-phosphoglycerides. The chain is Basic phospholipase A2 73 from Hydrophis hardwickii (Hardwick's spine-bellied seasnake).